The sequence spans 358 residues: Peptide chain release factor 1 (358 aa).

Gln234 is modified (N5-methylglutamine).

Belongs to the prokaryotic/mitochondrial release factor family. Methylated by PrmC. Methylation increases the termination efficiency of RF1.

It localises to the cytoplasm. Functionally, peptide chain release factor 1 directs the termination of translation in response to the peptide chain termination codons UAG and UAA. The polypeptide is Peptide chain release factor 1 (Chloroherpeton thalassium (strain ATCC 35110 / GB-78)).